The following is a 781-amino-acid chain: Transcription factor Sp3 (781 aa).

Over residues methionine 1–glutamate 12 the composition is skewed to basic and acidic residues. 2 disordered regions span residues methionine 1 to aspartate 53 and threonine 65 to proline 88. A compositionally biased stretch (gly residues) spans serine 20–glycine 31. A compositionally biased stretch (low complexity) spans glutamate 32–aspartate 53. At serine 73 the chain carries Phosphoserine. Lysine 120 participates in a covalent cross-link: Glycyl lysine isopeptide (Lys-Gly) (interchain with G-Cter in SUMO). Residues glutamine 138 to glutamine 237 are transactivation domain (Gln-rich). Positions glutamine 301–glutamine 338 are disordered. Positions asparagine 308 to serine 317 are enriched in basic and acidic residues. The span at isoleucine 320 to glutamine 338 shows a compositional bias: polar residues. Residues glutamine 350–glutamine 499 form a transactivation domain (Gln-rich) region. The short motif at valine 461–glutamine 469 is the 9aaTAD element. Residues isoleucine 534–glutamine 620 form a repressor domain region. Position 551 is an N6-acetyllysine; alternate (lysine 551). A Glycyl lysine isopeptide (Lys-Gly) (interchain with G-Cter in SUMO); alternate cross-link involves residue lysine 551. Lysine 551 is covalently cross-linked (Glycyl lysine isopeptide (Lys-Gly) (interchain with G-Cter in SUMO1); alternate). Lysine 551 participates in a covalent cross-link: Glycyl lysine isopeptide (Lys-Gly) (interchain with G-Cter in SUMO2); alternate. A phosphoserine mark is found at serine 563 and serine 566. A Glycyl lysine isopeptide (Lys-Gly) (interchain with G-Cter in SUMO2) cross-link involves residue lysine 593. The segment at histidine 621–histidine 645 adopts a C2H2-type 1 zinc-finger fold. At serine 646 the chain carries Phosphoserine. 2 C2H2-type zinc fingers span residues phenylalanine 651–histidine 675 and phenylalanine 681–histidine 703.

Belongs to the Sp1 C2H2-type zinc-finger protein family. As to quaternary structure, interacts with HLTF; the interaction may be required for basal transcriptional activity of HLTF. Interacts with HDAC1; the interaction deacetylates SP3 and regulates its transcriptional activity. Interacts with HDAC2 (preferably the CK2-phosphorylated form); the interaction deacetylates SP3 and regulates its transcriptional activity. Interacts with MEIS2 isoform 4 and PBX1 isoform PBX1a. Not glycosylated. In terms of processing, acetylated by histone acetyltransferase p300, deacetylated by HDACs. Acetylation/deacetylation states regulate transcriptional activity. Acetylation appears to activate transcription. Alternate sumoylation and acetylation at Lys-551 also control transcriptional activity. Ceramides can also regulate acetylation/deacetylation events through altering the interaction of HDAC with SP3. In vitro, C(18)-ceramides, but not C(16)-ceramides, increase the interaction of HDAC1 with SP3 and enhance the deacetylation of SP3 and the subsequent repression of the TERT promoter. Post-translationally, sumoylated on all isoforms. Sumoylated on 2 sites in longer isoforms with Lys-551 being the major site. Sumoylation at this site promotes nuclear localization to the nuclear periphery, nuclear dots and PML nuclear bodies. Sumoylation on Lys-551 represses the transactivation activity, except for the largest isoform, L-Sp3, which has little effect on transactivation. Alternate sumoylation and acetylation at Lys-551 also control transcriptional activity. Ubiquitously expressed.

The protein localises to the nucleus. It is found in the PML body. Transcriptional factor that can act as an activator or repressor depending on isoform and/or post-translational modifications. Binds to GT and GC boxes promoter elements. Competes with SP1 for the GC-box promoters. Weak activator of transcription but can activate a number of genes involved in different processes such as cell-cycle regulation, hormone-induction and house-keeping. The chain is Transcription factor Sp3 (SP3) from Homo sapiens (Human).